Here is a 346-residue protein sequence, read N- to C-terminus: Histidinol-phosphate aminotransferase (346 aa).

The residue at position 209 (K209) is an N6-(pyridoxal phosphate)lysine.

Belongs to the class-II pyridoxal-phosphate-dependent aminotransferase family. Histidinol-phosphate aminotransferase subfamily. In terms of assembly, homodimer. Pyridoxal 5'-phosphate is required as a cofactor.

The enzyme catalyses L-histidinol phosphate + 2-oxoglutarate = 3-(imidazol-4-yl)-2-oxopropyl phosphate + L-glutamate. It functions in the pathway amino-acid biosynthesis; L-histidine biosynthesis; L-histidine from 5-phospho-alpha-D-ribose 1-diphosphate: step 7/9. The sequence is that of Histidinol-phosphate aminotransferase from Vibrio cholerae serotype O1 (strain ATCC 39315 / El Tor Inaba N16961).